The following is a 491-amino-acid chain: Acetyl-coenzyme A carboxylase carboxyl transferase subunit beta, chloroplastic (491 aa).

Residues 28–56 (LGPIENTSESEDPNRNDMKKNSHSWGSRD) are disordered. A CoA carboxyltransferase N-terminal domain is found at 223 to 491 (LWVQCENCYG…FPLNKNSIEH (269 aa)). Positions 227, 230, 246, and 249 each coordinate Zn(2+). The C4-type zinc-finger motif lies at 227-249 (CENCYGLNYKKILKSKMNLCEQC).

It belongs to the AccD/PCCB family. In terms of assembly, acetyl-CoA carboxylase is a heterohexamer composed of biotin carboxyl carrier protein, biotin carboxylase and 2 subunits each of ACCase subunit alpha and ACCase plastid-coded subunit beta (accD). It depends on Zn(2+) as a cofactor.

It is found in the plastid. It localises to the chloroplast stroma. It carries out the reaction N(6)-carboxybiotinyl-L-lysyl-[protein] + acetyl-CoA = N(6)-biotinyl-L-lysyl-[protein] + malonyl-CoA. It functions in the pathway lipid metabolism; malonyl-CoA biosynthesis; malonyl-CoA from acetyl-CoA: step 1/1. Component of the acetyl coenzyme A carboxylase (ACC) complex. Biotin carboxylase (BC) catalyzes the carboxylation of biotin on its carrier protein (BCCP) and then the CO(2) group is transferred by the transcarboxylase to acetyl-CoA to form malonyl-CoA. In Daucus carota (Wild carrot), this protein is Acetyl-coenzyme A carboxylase carboxyl transferase subunit beta, chloroplastic.